The chain runs to 335 residues: NADH-quinone oxidoreductase subunit H (335 aa).

Helical transmembrane passes span 11-31 (VILT…CGAL), 81-101 (MIFT…FVVI), 114-134 (IGLL…LFAG), 154-174 (VSYE…VGSF), 187-207 (LWFI…GVAV), 238-258 (FFVG…TLFF), 270-290 (QVPF…FILL), and 307-327 (WKFC…VVLY).

Belongs to the complex I subunit 1 family. NDH-1 is composed of 13 different subunits. Subunits NuoA, H, J, K, L, M, N constitute the membrane sector of the complex.

Its subcellular location is the cell inner membrane. It catalyses the reaction a quinone + NADH + 5 H(+)(in) = a quinol + NAD(+) + 4 H(+)(out). In terms of biological role, NDH-1 shuttles electrons from NADH, via FMN and iron-sulfur (Fe-S) centers, to quinones in the respiratory chain. The immediate electron acceptor for the enzyme in this species is believed to be ubiquinone. Couples the redox reaction to proton translocation (for every two electrons transferred, four hydrogen ions are translocated across the cytoplasmic membrane), and thus conserves the redox energy in a proton gradient. This subunit may bind ubiquinone. This is NADH-quinone oxidoreductase subunit H from Pseudomonas entomophila (strain L48).